A 124-amino-acid chain; its full sequence is Fluoride-specific ion channel FluC (124 aa).

A run of 4 helical transmembrane segments spans residues 4 to 24 (VLYI…ISIL), 35 to 55 (FGTL…YALA), 60 to 80 (IGPE…TTFS), and 100 to 120 (LNVL…QQLI). Glycine 74 and threonine 77 together coordinate Na(+).

This sequence belongs to the fluoride channel Fluc/FEX (TC 1.A.43) family.

The protein resides in the cell inner membrane. The enzyme catalyses fluoride(in) = fluoride(out). Na(+) is not transported, but it plays an essential structural role and its presence is essential for fluoride channel function. Its function is as follows. Fluoride-specific ion channel. Important for reducing fluoride concentration in the cell, thus reducing its toxicity. This chain is Fluoride-specific ion channel FluC, found in Shewanella amazonensis (strain ATCC BAA-1098 / SB2B).